The following is a 73-amino-acid chain: Small ribosomal subunit protein uS15c (73 aa).

This sequence belongs to the universal ribosomal protein uS15 family. Part of the 30S ribosomal subunit.

It localises to the plastid. Its subcellular location is the chloroplast. This Welwitschia mirabilis (Tree tumbo) protein is Small ribosomal subunit protein uS15c (rps15).